The primary structure comprises 476 residues: CBL-interacting protein kinase 30 (476 aa).

The Protein kinase domain maps to 17-272; the sequence is YKLGRLLGRG…ISKIMDRPWF (256 aa). ATP contacts are provided by residues 23–31 and lysine 46; that span reads LGRGTFAKV. Residue aspartate 140 is the Proton acceptor of the active site. Positions 158-187 are activation loop; sequence DFGLSALDGGLRGDGLLHTTCGTPAYVAPE. Residues 296–315 are disordered; sequence KEASQQHDDEEDDGFAREKK. The 55-residue stretch at 299-353 folds into the NAF domain; that stretch reads SQQHDDEEDDGFAREKKKRSNVIMSSPVIDVRPSSMNAFDIISRSRGLDLSKMFD. The interval 358 to 387 is PPI; sequence RSEARFSTRETTTAIVSKLEEIAEAGRFSF.

The protein belongs to the protein kinase superfamily. CAMK Ser/Thr protein kinase family. SNF1 subfamily. The cofactor is Mn(2+).

It carries out the reaction L-seryl-[protein] + ATP = O-phospho-L-seryl-[protein] + ADP + H(+). It catalyses the reaction L-threonyl-[protein] + ATP = O-phospho-L-threonyl-[protein] + ADP + H(+). In terms of biological role, CIPK serine-threonine protein kinases interact with CBL proteins. Binding of a CBL protein to the regulatory NAF domain of CIPK protein lead to the activation of the kinase in a calcium-dependent manner. The polypeptide is CBL-interacting protein kinase 30 (CIPK30) (Oryza sativa subsp. japonica (Rice)).